A 1088-amino-acid polypeptide reads, in one-letter code: DNA mismatch repair protein MutS (1088 aa).

Positions 498-579 are disordered; it reads PLDGITPPDD…SFEMPSLHGH (82 aa). Residues 537 to 546 are compositionally biased toward acidic residues; sequence DLFDEEEEQE. Position 816-823 (816-823) interacts with ATP; that stretch reads GPNMSGKS. The disordered stretch occupies residues 1000–1048; the sequence is LERRAPRSTPQPAPERTEERPAAGRPTARSHSAARGDPPRAPDGQLSLF.

Belongs to the DNA mismatch repair MutS family.

This protein is involved in the repair of mismatches in DNA. It is possible that it carries out the mismatch recognition step. This protein has a weak ATPase activity. The sequence is that of DNA mismatch repair protein MutS from Roseiflexus castenholzii (strain DSM 13941 / HLO8).